Reading from the N-terminus, the 499-residue chain is Nuclear receptor-binding protein 2 (499 aa).

The tract at residues 1–31 (MAAPEPAPRRGREREREDESEDESDILEESP) is disordered. Over residues 7-17 (APRRGRERERE) the composition is skewed to basic and acidic residues. A compositionally biased stretch (acidic residues) spans 18–28 (DESEDESDILE). Residues 36 to 304 (QKRREQVNQG…AHNLLFHRVL (269 aa)) form the Protein kinase domain. Positions 396–416 (APPPEEAQKAKTPTPEPFDSE) are disordered. 2 positions are modified to phosphothreonine: T407 and T409.

The protein belongs to the protein kinase superfamily. Ser/Thr protein kinase family. Expressed in Purkinje cells of the cerebellum and neurons in the CA3 region of the hippocampus. Also detected in non-neural tissues including mesenchymal layer adjacent to epithelium in developing bronchi of the lung, the epithelium of the stomach as well as cells in the liver.

The protein localises to the cytoplasm. Its function is as follows. May regulate apoptosis of neural progenitor cells during their differentiation. The sequence is that of Nuclear receptor-binding protein 2 from Mus musculus (Mouse).